The sequence spans 291 residues: Undecaprenyl-diphosphatase (291 aa).

The next 8 helical transmembrane spans lie at 1 to 21 (MFIIELIKGIILGVVEGLTEF), 48 to 68 (SAFTFKIVIQLGSVFAAAWVF), 102 to 122 (LHVLVGMVPAGILGLLFDDFI), 126 to 146 (LFSVPTVMIGLFVGAIYMIIA), 162 to 182 (INYFQAFVIGISQAVAMWPGF), 203 to 223 (SDFTFIMAVPIMLAASGLSLL), 231 to 251 (IADIPFYILGFLAAFTVGLIA), and 267 to 287 (FAIYRIVLVIFIAILYFGFGI).

The protein belongs to the UppP family.

It localises to the cell membrane. The enzyme catalyses di-trans,octa-cis-undecaprenyl diphosphate + H2O = di-trans,octa-cis-undecaprenyl phosphate + phosphate + H(+). Its function is as follows. Catalyzes the dephosphorylation of undecaprenyl diphosphate (UPP). Confers resistance to bacitracin. The sequence is that of Undecaprenyl-diphosphatase from Staphylococcus aureus (strain Mu3 / ATCC 700698).